A 170-amino-acid chain; its full sequence is Small ribosomal subunit protein uS15 (170 aa).

Basic residues predominate over residues 1-10 (MARMHSRKKG). Residues 1 to 20 (MARMHSRKKGSSGSRPPVVD) are disordered.

It belongs to the universal ribosomal protein uS15 family. Part of the 30S ribosomal subunit.

This Methanothrix thermoacetophila (strain DSM 6194 / JCM 14653 / NBRC 101360 / PT) (Methanosaeta thermophila) protein is Small ribosomal subunit protein uS15.